The sequence spans 211 residues: Small ribosomal subunit protein uS4 (211 aa).

The disordered stretch occupies residues 27–48 (GRKVLERRGSQPPGQHGASVRR). The S4 RNA-binding domain maps to 99–162 (RRLDNVVFRL…RKRDYFKDLE (64 aa)).

It belongs to the universal ribosomal protein uS4 family. Part of the 30S ribosomal subunit. Contacts protein S5. The interaction surface between S4 and S5 is involved in control of translational fidelity.

Functionally, one of the primary rRNA binding proteins, it binds directly to 16S rRNA where it nucleates assembly of the body of the 30S subunit. Its function is as follows. With S5 and S12 plays an important role in translational accuracy. The protein is Small ribosomal subunit protein uS4 of Herpetosiphon aurantiacus (strain ATCC 23779 / DSM 785 / 114-95).